A 324-amino-acid polypeptide reads, in one-letter code: Deoxyhypusine hydroxylase (324 aa).

HEAT-like PBS-type repeat units follow at residues L60–D86 and R94–R119. Residues H62, E63, H95, and E96 each coordinate Fe cation. Positions E143–Q152 are enriched in basic and acidic residues. The tract at residues E143–Q171 is disordered. HEAT-like PBS-type repeat units follow at residues K189–G219, F227–N253, and V260–D287. Fe cation-binding residues include H229, E230, H262, and E263.

This sequence belongs to the deoxyhypusine hydroxylase family. Fe(2+) is required as a cofactor.

Its subcellular location is the cytoplasm. It is found in the nucleus. The catalysed reaction is [eIF5A protein]-deoxyhypusine + AH2 + O2 = [eIF5A protein]-hypusine + A + H2O. Its pathway is protein modification; eIF5A hypusination. In terms of biological role, catalyzes the hydroxylation of the N(6)-(4-aminobutyl)-L-lysine intermediate to form hypusine, an essential post-translational modification only found in mature eIF-5A factor. This Neurospora crassa (strain ATCC 24698 / 74-OR23-1A / CBS 708.71 / DSM 1257 / FGSC 987) protein is Deoxyhypusine hydroxylase (lia1).